Reading from the N-terminus, the 676-residue chain is DNA ligase (676 aa).

NAD(+)-binding positions include 42–46 (DDVYD), 91–92 (SL), and E121. The active-site N6-AMP-lysine intermediate is K123. 4 residues coordinate NAD(+): R144, E178, K294, and K318. Residues C412, C415, C430, and C435 each contribute to the Zn(2+) site. One can recognise a BRCT domain in the interval 596–676 (NSTSEFTGKR…QLQAAMDETK (81 aa)).

The protein belongs to the NAD-dependent DNA ligase family. LigA subfamily. Mg(2+) is required as a cofactor. Requires Mn(2+) as cofactor.

The enzyme catalyses NAD(+) + (deoxyribonucleotide)n-3'-hydroxyl + 5'-phospho-(deoxyribonucleotide)m = (deoxyribonucleotide)n+m + AMP + beta-nicotinamide D-nucleotide.. DNA ligase that catalyzes the formation of phosphodiester linkages between 5'-phosphoryl and 3'-hydroxyl groups in double-stranded DNA using NAD as a coenzyme and as the energy source for the reaction. It is essential for DNA replication and repair of damaged DNA. This chain is DNA ligase, found in Levilactobacillus brevis (strain ATCC 367 / BCRC 12310 / CIP 105137 / JCM 1170 / LMG 11437 / NCIMB 947 / NCTC 947) (Lactobacillus brevis).